A 398-amino-acid polypeptide reads, in one-letter code: Riboflavin transporter RfnT (398 aa).

12 helical membrane passes run 13–35 (ILTIAQALGASSPPIVISLGGLV), 45–67 (LVTLPVSLFNLGLALGTLPAAFF), 74–91 (RNAYMLGALVGAAAGVIA), 95–117 (IFAASFLIFCLGTLTAGFYASYV), 137–156 (ISWVMVGGLVAAIVGPQLVI), 166–188 (MFAGSFLSQAVLGLLALPVLFML), 220–242 (VAAGVCSYALMTFVMTAAPIAMV), 252–274 (ALGIQWHVLAMFAPSFFTGKLIT), 281–300 (ITALGLVLIAFSAIIALGGF), 305–324 (FWGALIFLGIGWNFGFIGAT), 345–367 (FIMFGTVACASFFAGSLLHSSGW), and 372–389 (WLVFPIVALVLVPLILRL).

Belongs to the major facilitator superfamily.

It localises to the cell membrane. Its function is as follows. Transports riboflavin into the cell. This chain is Riboflavin transporter RfnT, found in Brucella anthropi (strain ATCC 49188 / DSM 6882 / CCUG 24695 / JCM 21032 / LMG 3331 / NBRC 15819 / NCTC 12168 / Alc 37) (Ochrobactrum anthropi).